Consider the following 312-residue polypeptide: tRNA dimethylallyltransferase (312 aa).

11–18 lines the ATP pocket; that stretch reads GLTATGKT. Residue 13 to 18 coordinates substrate; it reads TATGKT. An interaction with substrate tRNA region spans residues 36 to 39; sequence DSMC.

This sequence belongs to the IPP transferase family. Monomer. Mg(2+) is required as a cofactor.

The catalysed reaction is adenosine(37) in tRNA + dimethylallyl diphosphate = N(6)-dimethylallyladenosine(37) in tRNA + diphosphate. Catalyzes the transfer of a dimethylallyl group onto the adenine at position 37 in tRNAs that read codons beginning with uridine, leading to the formation of N6-(dimethylallyl)adenosine (i(6)A). The chain is tRNA dimethylallyltransferase from Caldicellulosiruptor saccharolyticus (strain ATCC 43494 / DSM 8903 / Tp8T 6331).